Consider the following 261-residue polypeptide: Chanoclavine-I dehydrogenase ifgE (261 aa).

Positions 1-20 are cleaved as a signal peptide; the sequence is MASVKSRVFAITGGASGIGA. NADP(+) is bound by residues I18, K48, D66, R132, Y166, K170, and T201. The active-site Proton acceptor is the Y166. Residue K170 is the Lowers pKa of active site Tyr of the active site.

It belongs to the short-chain dehydrogenases/reductases (SDR) family.

It participates in alkaloid biosynthesis; ergot alkaloid biosynthesis. Functionally, chanoclavine-I dehydrogenase; part of the gene cluster that mediates the biosynthesis of isofumigaclavines, fungal ergot alkaloids. The tryptophan dimethylallyltransferase ifgA catalyzes the first step of ergot alkaloid biosynthesis by condensing dimethylallyl diphosphate (DMAP) and tryptophan to form 4-dimethylallyl-L-tryptophan. The second step is catalyzed by the methyltransferase ifgB that methylates 4-dimethylallyl-L-tryptophan in the presence of S-adenosyl-L-methionine, resulting in the formation of N-methyl-dimethylallyl-L-tryptophan. The catalase ifgD and the FAD-dependent oxidoreductase ifgC then transform N-methyl-dimethylallyl-L-tryptophan to chanoclavine-I which is further oxidized by ifgE in the presence of NAD(+), resulting in the formation of chanoclavine-I aldehyde. The chanoclavine-I aldehyde reductases ifgG and/or fgaOx3 reduce chanoclavine-I aldehyde to dihydrochanoclavine-I aldehyde that spontaneously dehydrates to form 6,8-dimethyl-6,7-didehydroergoline. The festuclavine dehydrogenases ifgF1 and/or ifgF2 then catalyze the reduction of 6,8-dimethyl-6,7-didehydroergoline to form festuclavine. Hydrolysis of festuclavine by a yet undetermined cytochrome P450 monooxygenase (called ifgH) then leads to the formation of isofumigaclavine B which is in turn acetylated by ifgI to isofumigaclavine A. Penicillium roqueforti has interestingly at least two sets of genes for the consumption of chanoclavine-I aldehyde on three different loci, the OYEs ifgG/fgaOx3 and the festuclavine synthase homologs ifgF1/ifgF2. The reason for the duplication of these genes is unclear, probably to ensure the conversion of chanoclavine-I aldehyde by differential gene expression under various environmental conditions. This Penicillium roqueforti (strain FM164) protein is Chanoclavine-I dehydrogenase ifgE.